Here is a 304-residue protein sequence, read N- to C-terminus: Acetyl-coenzyme A carboxylase carboxyl transferase subunit beta (304 aa).

In terms of domain architecture, CoA carboxyltransferase N-terminal spans 23–292 (VWTKCDSCGQ…PNPEAPREGV (270 aa)). Positions 27, 30, 46, and 49 each coordinate Zn(2+). The C4-type zinc-finger motif lies at 27–49 (CDSCGQVLYRAELERNLEVCPKC). The disordered stretch occupies residues 284–304 (NPEAPREGVVVPPVPDQEPEA). Pro residues predominate over residues 295–304 (PPVPDQEPEA).

The protein belongs to the AccD/PCCB family. Acetyl-CoA carboxylase is a heterohexamer composed of biotin carboxyl carrier protein (AccB), biotin carboxylase (AccC) and two subunits each of ACCase subunit alpha (AccA) and ACCase subunit beta (AccD). It depends on Zn(2+) as a cofactor.

It localises to the cytoplasm. The enzyme catalyses N(6)-carboxybiotinyl-L-lysyl-[protein] + acetyl-CoA = N(6)-biotinyl-L-lysyl-[protein] + malonyl-CoA. The protein operates within lipid metabolism; malonyl-CoA biosynthesis; malonyl-CoA from acetyl-CoA: step 1/1. In terms of biological role, component of the acetyl coenzyme A carboxylase (ACC) complex. Biotin carboxylase (BC) catalyzes the carboxylation of biotin on its carrier protein (BCCP) and then the CO(2) group is transferred by the transcarboxylase to acetyl-CoA to form malonyl-CoA. The chain is Acetyl-coenzyme A carboxylase carboxyl transferase subunit beta from Shigella boydii serotype 18 (strain CDC 3083-94 / BS512).